The chain runs to 384 residues: S-adenosylmethionine synthase (384 aa).

Histidine 15 is a binding site for ATP. Position 17 (aspartate 17) interacts with Mg(2+). Glutamate 43 serves as a coordination point for K(+). Positions 56 and 99 each coordinate L-methionine. A flexible loop region spans residues 99–109; it reads QSPDINQGVDR. Residues 164–166, 230–231, aspartate 239, 245–246, alanine 262, and lysine 266 each bind ATP; these read DAK, RF, and RK. Residue aspartate 239 coordinates L-methionine. An L-methionine-binding site is contributed by lysine 270.

Belongs to the AdoMet synthase family. In terms of assembly, homotetramer; dimer of dimers. Mg(2+) serves as cofactor. The cofactor is K(+).

Its subcellular location is the cytoplasm. It catalyses the reaction L-methionine + ATP + H2O = S-adenosyl-L-methionine + phosphate + diphosphate. Its pathway is amino-acid biosynthesis; S-adenosyl-L-methionine biosynthesis; S-adenosyl-L-methionine from L-methionine: step 1/1. Catalyzes the formation of S-adenosylmethionine (AdoMet) from methionine and ATP. The overall synthetic reaction is composed of two sequential steps, AdoMet formation and the subsequent tripolyphosphate hydrolysis which occurs prior to release of AdoMet from the enzyme. In Klebsiella pneumoniae (strain 342), this protein is S-adenosylmethionine synthase.